We begin with the raw amino-acid sequence, 313 residues long: Ribosomal RNA small subunit methyltransferase H (313 aa).

S-adenosyl-L-methionine is bound by residues 35–37, Asp-55, Phe-79, Asp-101, and Gln-108; that span reads GGH.

The protein belongs to the methyltransferase superfamily. RsmH family.

The protein resides in the cytoplasm. It carries out the reaction cytidine(1402) in 16S rRNA + S-adenosyl-L-methionine = N(4)-methylcytidine(1402) in 16S rRNA + S-adenosyl-L-homocysteine + H(+). In terms of biological role, specifically methylates the N4 position of cytidine in position 1402 (C1402) of 16S rRNA. This Shigella sonnei (strain Ss046) protein is Ribosomal RNA small subunit methyltransferase H.